We begin with the raw amino-acid sequence, 188 residues long: MATYSSNDFRSGLKIIFESEPYAIESSEFVKPGKGQAFARVKMRRLLTGSRVEKTFKSTDSLEGADVVDTNMNYLYNDGEFYHFMHPETFEQHQVEEKTVGDSAKWLQDNAECIVTLWDGRPITVLPPNFIEAEITDTDPGLKGDTAGTGGKPATLSTGAVVKVPLFVQIGEVVRVDTRSGEYVSRVK.

Lys34 carries the N6-(3,6-diaminohexanoyl)-5-hydroxylysine modification.

It belongs to the elongation factor P family. In terms of processing, may be beta-lysylated on the epsilon-amino group of Lys-34 by the combined action of EpmA and EpmB, and then hydroxylated on the C5 position of the same residue by EpmC (if this protein is present). Lysylation is critical for the stimulatory effect of EF-P on peptide-bond formation. The lysylation moiety may extend toward the peptidyltransferase center and stabilize the terminal 3-CCA end of the tRNA. Hydroxylation of the C5 position on Lys-34 may allow additional potential stabilizing hydrogen-bond interactions with the P-tRNA.

It localises to the cytoplasm. Its pathway is protein biosynthesis; polypeptide chain elongation. In terms of biological role, involved in peptide bond synthesis. Alleviates ribosome stalling that occurs when 3 or more consecutive Pro residues or the sequence PPG is present in a protein, possibly by augmenting the peptidyl transferase activity of the ribosome. Modification of Lys-34 is required for alleviation. The chain is Elongation factor P from Pectobacterium atrosepticum (strain SCRI 1043 / ATCC BAA-672) (Erwinia carotovora subsp. atroseptica).